The following is a 218-amino-acid chain: 3-dehydroquinate dehydratase (218 aa).

3-dehydroquinate-binding positions include 29–31 (EFR) and R56. H116 (proton donor/acceptor) is an active-site residue. The active-site Schiff-base intermediate with substrate is K142. 3-dehydroquinate contacts are provided by R180, S200, and Q204.

Belongs to the type-I 3-dehydroquinase family. Homodimer.

It carries out the reaction 3-dehydroquinate = 3-dehydroshikimate + H2O. It participates in metabolic intermediate biosynthesis; chorismate biosynthesis; chorismate from D-erythrose 4-phosphate and phosphoenolpyruvate: step 3/7. In terms of biological role, involved in the third step of the chorismate pathway, which leads to the biosynthesis of aromatic amino acids. Catalyzes the cis-dehydration of 3-dehydroquinate (DHQ) and introduces the first double bond of the aromatic ring to yield 3-dehydroshikimate. This chain is 3-dehydroquinate dehydratase, found in Methanococcus maripaludis (strain C7 / ATCC BAA-1331).